A 260-amino-acid chain; its full sequence is Proteasome subunit alpha (260 aa).

This sequence belongs to the peptidase T1A family. As to quaternary structure, the 20S proteasome core is composed of 14 alpha and 14 beta subunits that assemble into four stacked heptameric rings, resulting in a barrel-shaped structure. The two inner rings, each composed of seven catalytic beta subunits, are sandwiched by two outer rings, each composed of seven alpha subunits. The catalytic chamber with the active sites is on the inside of the barrel. Has a gated structure, the ends of the cylinder being occluded by the N-termini of the alpha-subunits. Is capped at one or both ends by the proteasome regulatory ATPase, PAN.

Its subcellular location is the cytoplasm. The formation of the proteasomal ATPase PAN-20S proteasome complex, via the docking of the C-termini of PAN into the intersubunit pockets in the alpha-rings, triggers opening of the gate for substrate entry. Interconversion between the open-gate and close-gate conformations leads to a dynamic regulation of the 20S proteasome proteolysis activity. In terms of biological role, component of the proteasome core, a large protease complex with broad specificity involved in protein degradation. In Thermococcus sp. (strain JCM 11816 / KS-1), this protein is Proteasome subunit alpha.